The primary structure comprises 636 residues: Ligand-gated ion channel 4 (636 aa).

A signal peptide spans 1–25 (MVICHSCTTFCILLVIDLVPCRIVG). Over 26–326 (MENVENRVMF…IHMHRRPLFY (301 aa)) the chain is Extracellular. Residues Asn45, Asn141, Asn179, and Asn227 are each glycosylated (N-linked (GlcNAc...) asparagine). Cys240 and Cys254 are oxidised to a cystine. N-linked (GlcNAc...) asparagine glycosylation occurs at Asn284. Transmembrane regions (helical) follow at residues 327-347 (VFNH…GFLM), 357-377 (MIIT…ESIP), and 383-403 (VPLI…ATCV). At 404–602 (NVITLNMHRN…QLASVVDRLL (199 aa)) the chain is on the cytoplasmic side. A helical transmembrane segment spans residues 603-623 (LCLFCTATLFTIICLLIVPVV).

It belongs to the ligand-gated ion channel (TC 1.A.9) family.

Its subcellular location is the postsynaptic cell membrane. It localises to the cell membrane. In terms of biological role, acetylcholine receptor. The chain is Ligand-gated ion channel 4 from Caenorhabditis briggsae.